The primary structure comprises 269 residues: Ribosomal RNA large subunit methyltransferase E (269 aa).

Residues Gly-58, Trp-60, Asp-78, Asp-96, and Asp-120 each contribute to the S-adenosyl-L-methionine site. Lys-160 acts as the Proton acceptor in catalysis. Residues 234–269 (HEKKEGNETSDNDEDNNKNGLMIKKIKELRGKRSKL) are disordered. The segment covering 258 to 269 (KIKELRGKRSKL) has biased composition (basic and acidic residues).

It belongs to the class I-like SAM-binding methyltransferase superfamily. RNA methyltransferase RlmE family.

The protein localises to the cytoplasm. It carries out the reaction uridine(2552) in 23S rRNA + S-adenosyl-L-methionine = 2'-O-methyluridine(2552) in 23S rRNA + S-adenosyl-L-homocysteine + H(+). In terms of biological role, specifically methylates the uridine in position 2552 of 23S rRNA at the 2'-O position of the ribose in the fully assembled 50S ribosomal subunit. This chain is Ribosomal RNA large subunit methyltransferase E, found in Methanococcus aeolicus (strain ATCC BAA-1280 / DSM 17508 / OCM 812 / Nankai-3).